A 257-amino-acid polypeptide reads, in one-letter code: General L-amino acid transport ATP-binding protein AapP (257 aa).

One can recognise an ABC transporter domain in the interval 18–252 (VEIVNMNKWY…PQHERTKLFL (235 aa)). 50 to 57 (GPSGSGKS) is an ATP binding site.

The protein belongs to the ABC transporter superfamily.

Part of a binding-protein-dependent transport system for L-amino acids, affects the uptake as well as the efflux of these amino acids. Probably responsible for energy coupling to the transport system. The chain is General L-amino acid transport ATP-binding protein AapP (aapP) from Rhizobium johnstonii (strain DSM 114642 / LMG 32736 / 3841) (Rhizobium leguminosarum bv. viciae).